Reading from the N-terminus, the 60-residue chain is MARLKITQIKSKVSEKQYQRDTLRSLGLKRIGDVTVREDTAQNRGYVRTVAHLVKVEEID.

It belongs to the universal ribosomal protein uL30 family. Part of the 50S ribosomal subunit.

This Leifsonia xyli subsp. xyli (strain CTCB07) protein is Large ribosomal subunit protein uL30.